Consider the following 627-residue polypeptide: Transducer protein MpcT (627 aa).

Helical transmembrane passes span 28 to 48 (MLTAVGLQFLAAGGMAFLTVF) and 55 to 75 (LIGVGGMLALSVVAFYNTYLI). HAMP domains follow at residues 78 to 132 (ADFV…VASR) and 192 to 247 (EQLR…DTIS). Positions 266–502 (RVDAVADRSA…DVVGMVEEVA (237 aa)) constitute a Methyl-accepting transducer domain. Glutamate methyl ester (Glu) is present on residues Glu-310, Glu-416, and Glu-507. 2 disordered regions span residues 505–527 (SEETAAESDTVADNAAEQTDATD) and 557–627 (GTAD…ADSQ). A compositionally biased stretch (low complexity) spans 580–590 (AAAVVDQPQPA).

Belongs to the methyl-accepting chemotaxis (MCP) protein family. In terms of assembly, interacts with CheA, CheY and CheW1. In terms of processing, methylated by CheR.

It localises to the cell membrane. Functionally, mediates bacteriorhodopsin- and halorhodopsin-dependent photoresponses by detecting membrane potential changes. Probably transduces the signal to the histidine kinase CheA. The sequence is that of Transducer protein MpcT (mpcT) from Halobacterium salinarum (strain ATCC 29341 / DSM 671 / R1).